The primary structure comprises 332 residues: Nucleoid-associated protein VVA0877 (332 aa).

Belongs to the YejK family.

It is found in the cytoplasm. Its subcellular location is the nucleoid. The chain is Nucleoid-associated protein VVA0877 from Vibrio vulnificus (strain YJ016).